The following is a 361-amino-acid chain: Outer mitochondrial transmembrane helix translocase (361 aa).

Over 1–15 (MVHAEAFSRPLSRNE) the chain is Mitochondrial intermembrane. A helical membrane pass occupies residues 16–32 (VVGLIFRLTIFGAVTYF). Residues 33 to 361 (TIKWMVDAID…QNVLTHVCLD (329 aa)) lie on the Cytoplasmic side of the membrane. 133-140 (GPPGCGKT) provides a ligand contact to ATP. The residue at position 322 (Ser322) is a Phosphoserine.

This sequence belongs to the AAA ATPase family. MSP1 subfamily. Interacts with GRIA2 and GRIP1 in an ATP-dependent manner. ATAD1-catalyzed ATP hydrolysis disrupts not only its binding to GRIA2 and GRIP1, but also interaction between GRIP1 and GRIA2, leading to AMPAR complex disassembly.

The protein localises to the mitochondrion outer membrane. The protein resides in the peroxisome membrane. It localises to the postsynaptic cell membrane. The enzyme catalyses [protein]-with a C-terminal TM segment(out) + ATP + H2O = [protein]-with a C-terminal TM segment(in) + ADP + phosphate + H(+). Outer mitochondrial translocase required to remove mislocalized tail-anchored transmembrane proteins on mitochondria. Specifically recognizes and binds tail-anchored transmembrane proteins: acts as a dislocase that mediates the ATP-dependent extraction of mistargeted tail-anchored transmembrane proteins from the mitochondrion outer membrane. Also plays a critical role in regulating the surface expression of AMPA receptors (AMPAR), thereby regulating synaptic plasticity and learning and memory. Required for NMDA-stimulated AMPAR internalization and inhibition of GRIA1 and GRIA2 recycling back to the plasma membrane; these activities are ATPase-dependent. The protein is Outer mitochondrial transmembrane helix translocase of Homo sapiens (Human).